The following is a 323-amino-acid chain: Tyrosine--tRNA ligase (323 aa).

Residue Tyr36 coordinates L-tyrosine. Positions 41–49 (PSGEIHLGH) match the 'HIGH' region motif. Positions 158, 162, 165, and 180 each coordinate L-tyrosine. The 'KMSKS' region signature appears at 214–218 (KMSSS). Ser217 is a binding site for ATP.

The protein belongs to the class-I aminoacyl-tRNA synthetase family. TyrS type 3 subfamily. As to quaternary structure, homodimer.

The protein localises to the cytoplasm. It carries out the reaction tRNA(Tyr) + L-tyrosine + ATP = L-tyrosyl-tRNA(Tyr) + AMP + diphosphate + H(+). Functionally, catalyzes the attachment of tyrosine to tRNA(Tyr) in a two-step reaction: tyrosine is first activated by ATP to form Tyr-AMP and then transferred to the acceptor end of tRNA(Tyr). In Archaeoglobus fulgidus (strain ATCC 49558 / DSM 4304 / JCM 9628 / NBRC 100126 / VC-16), this protein is Tyrosine--tRNA ligase.